The primary structure comprises 398 residues: Acetate kinase (398 aa).

Residue N7 coordinates Mg(2+). K14 contributes to the ATP binding site. R92 provides a ligand contact to substrate. The active-site Proton donor/acceptor is D149. Residues 208 to 212 (HLGNG), 283 to 285 (DCR), and 331 to 335 (GIGEN) contribute to the ATP site. E385 is a binding site for Mg(2+).

It belongs to the acetokinase family. Homodimer. Mg(2+) serves as cofactor. It depends on Mn(2+) as a cofactor.

It is found in the cytoplasm. The enzyme catalyses acetate + ATP = acetyl phosphate + ADP. Its pathway is metabolic intermediate biosynthesis; acetyl-CoA biosynthesis; acetyl-CoA from acetate: step 1/2. In terms of biological role, catalyzes the formation of acetyl phosphate from acetate and ATP. Can also catalyze the reverse reaction. The chain is Acetate kinase from Fusobacterium nucleatum subsp. nucleatum (strain ATCC 25586 / DSM 15643 / BCRC 10681 / CIP 101130 / JCM 8532 / KCTC 2640 / LMG 13131 / VPI 4355).